Reading from the N-terminus, the 441-residue chain is Matrix extracellular phosphoglycoprotein (441 aa).

An N-terminal signal peptide occupies residues 1–24 (MTPEGLMKMQAVSVGLLLFSMTWA). N-linked (GlcNAc...) asparagine glycosylation is present at asparagine 82. The tract at residues 137-441 (QSSPVKSKHT…SGSSSESHGD (305 aa)) is disordered. The segment covering 142–156 (KSKHTKHTRQTRRST) has biased composition (basic residues). Positions 178 to 200 (PDLLVRGDNDVPPFSGDGQHFMH) are dentonin. A Cell attachment site motif is present at residues 183 to 185 (RGD). Serine 192 is a glycosylation site (O-linked (Xyl...) (chondroitin sulfate) serine). Residues 211 to 223 (PESSTSRPLSGSS) show a composition bias toward polar residues. Residues 313–325 (SREKVKGGVEHAG) show a composition bias toward basic and acidic residues. Polar residues-rich tracts occupy residues 349-358 (GNQLTLTASQ) and 391-405 (GQNNLTPNKGMSQRR). The ASARM motif; interaction with PHEX stretch occupies residues 424-441 (RDSSESSSSGSSSESHGD). The segment covering 428–441 (ESSSSGSSSESHGD) has biased composition (low complexity).

Belongs to the PF07175/osteoregulin family. As to quaternary structure, interacts (via ASARM motif) with PHEX; the interaction is zinc-dependent. In terms of processing, phosphorylated on serine residues in the ASARM motif; the phosphorylation is important for the inhibition of bone mineralization. Cleaved by CTSB/cathepsin B; the cleavage is blocked by metalloprotease PHEX. As to expression, expressed in osteocytes (at protein level). Expressed by chondrocytes, specifically in the hypertrophic zone of the bone growth plate (at protein level). Expressed in osteoblasts in bone (at protein level). Expressed by osteoblasts within the metaphysis (at protein level). Expressed at low levels in white fat, brown fat, testes, brain and aorta. Expressed in the craniofacial complex (at protein level). Expressed in odontoblasts, ameloblasts and in predentin during tooth development (at protein level). Expressed in the kidney (at protein level). Expressed in osteocytes in mandibular condylar cartilage and tibial cartilage (at protein level). Expressed in salivary glands.

It localises to the secreted. It is found in the extracellular space. The protein localises to the extracellular matrix. Its function is as follows. Regulates renal phosphate and uric acid excretion. Regulates bone mineralization by osteoblasts and cartilage mineralization by chondrocytes. Regulates the mineralization of the extracellular matrix of the craniofacial complex, such as teeth, bone and cartilage. Increases dental pulp stem cell proliferation. The polypeptide is Matrix extracellular phosphoglycoprotein (Mus musculus (Mouse)).